The primary structure comprises 362 residues: Phosphoserine aminotransferase (362 aa).

Residue Arg-42 coordinates L-glutamate. Residues 76–77 (AR), Trp-102, Thr-154, Asp-174, and Gln-197 contribute to the pyridoxal 5'-phosphate site. The residue at position 198 (Lys-198) is an N6-(pyridoxal phosphate)lysine. A pyridoxal 5'-phosphate-binding site is contributed by 239–240 (NT).

Belongs to the class-V pyridoxal-phosphate-dependent aminotransferase family. SerC subfamily. In terms of assembly, homodimer. Pyridoxal 5'-phosphate is required as a cofactor.

The protein localises to the cytoplasm. It carries out the reaction O-phospho-L-serine + 2-oxoglutarate = 3-phosphooxypyruvate + L-glutamate. It catalyses the reaction 4-(phosphooxy)-L-threonine + 2-oxoglutarate = (R)-3-hydroxy-2-oxo-4-phosphooxybutanoate + L-glutamate. Its pathway is amino-acid biosynthesis; L-serine biosynthesis; L-serine from 3-phospho-D-glycerate: step 2/3. It functions in the pathway cofactor biosynthesis; pyridoxine 5'-phosphate biosynthesis; pyridoxine 5'-phosphate from D-erythrose 4-phosphate: step 3/5. Its function is as follows. Catalyzes the reversible conversion of 3-phosphohydroxypyruvate to phosphoserine and of 3-hydroxy-2-oxo-4-phosphonooxybutanoate to phosphohydroxythreonine. The sequence is that of Phosphoserine aminotransferase from Buchnera aphidicola subsp. Cinara cedri (strain Cc).